A 116-amino-acid chain; its full sequence is Tachykinin-3 (116 aa).

The N-terminal stretch at 1-20 (MRSAMLFAAVLALSLAWTFG) is a signal peptide. A propeptide spanning residues 21-79 (AACEEPQEQGGRLSKDSDLSLLPPPLLRRLYDSRSISLEGLLKVLSKASVGPKETSLPQ) is cleaved from the precursor. Met91 carries the methionine amide modification. The interval 92–116 (GKRNSQPDTPADVVEENTPSFGVLK) is disordered. Positions 95 to 116 (NSQPDTPADVVEENTPSFGVLK) are excised as a propeptide.

It belongs to the tachykinin family.

The protein localises to the secreted. Functionally, tachykinins are active peptides which excite neurons, evoke behavioral responses, are potent vasodilators and secretagogues, and contract (directly or indirectly) many smooth muscles. Is a critical central regulator of gonadal function. The chain is Tachykinin-3 (Tac3) from Rattus norvegicus (Rat).